Consider the following 401-residue polypeptide: Adaptive-response sensory kinase SasA (401 aa).

In terms of domain architecture, Histidine kinase spans 175-400; sequence MLVHDLRNPL…WFHFTLPVYP (226 aa). His-178 carries the post-translational modification Phosphohistidine; by autocatalysis.

In terms of assembly, homooligomerizes. Interacts with KaiC. Participates in the KaiABC clock complex, whose core is composed of a KaiC homohexamer, 6 KaiB and up to 6 KaiA dimers. SasA and KaiB(fs) compete to bind to KaiC.

It catalyses the reaction ATP + protein L-histidine = ADP + protein N-phospho-L-histidine.. In terms of biological role, member of the two-component regulatory system SasA/RpaA involved in genome-wide circadian gene expression. One of several clock output pathways. Participates in the Kai clock protein complex, the main circadian regulator in cyanobacteria, via its interaction with KaiC. KaiC enhances the autophosphorylation activity of SasA, which then transfers its phosphate group to RpaA to activate it. In addition to its output function, recruits fold-shifted KaiB (KaiB(fs)) to KaiC to cooperatively form the KaiB(6):KaiC(6) complex (independent of SasA kinase activity). Required for robustness of the circadian rhythm of gene expression and is involved in clock output, also required for adaptation to light/dark cycles. This Trichormus variabilis (strain ATCC 29413 / PCC 7937) (Anabaena variabilis) protein is Adaptive-response sensory kinase SasA.